The primary structure comprises 257 residues: Phosphate import ATP-binding protein PstB (257 aa).

An ABC transporter domain is found at L11 to I252. G43–S50 is a binding site for ATP.

It belongs to the ABC transporter superfamily. Phosphate importer (TC 3.A.1.7) family. The complex is composed of two ATP-binding proteins (PstB), two transmembrane proteins (PstC and PstA) and a solute-binding protein (PstS).

It localises to the cell inner membrane. It catalyses the reaction phosphate(out) + ATP + H2O = ADP + 2 phosphate(in) + H(+). Functionally, part of the ABC transporter complex PstSACB involved in phosphate import. Responsible for energy coupling to the transport system. The sequence is that of Phosphate import ATP-binding protein PstB from Chromobacterium violaceum (strain ATCC 12472 / DSM 30191 / JCM 1249 / CCUG 213 / NBRC 12614 / NCIMB 9131 / NCTC 9757 / MK).